The chain runs to 445 residues: Phosphoglucosamine mutase (445 aa).

The Phosphoserine intermediate role is filled by Ser-101. Mg(2+)-binding residues include Ser-101, Asp-240, Asp-242, and Asp-244. Ser-101 carries the phosphoserine modification.

The protein belongs to the phosphohexose mutase family. Mg(2+) is required as a cofactor. Post-translationally, activated by phosphorylation.

The catalysed reaction is alpha-D-glucosamine 1-phosphate = D-glucosamine 6-phosphate. Catalyzes the conversion of glucosamine-6-phosphate to glucosamine-1-phosphate. This is Phosphoglucosamine mutase from Pseudomonas fluorescens (strain ATCC BAA-477 / NRRL B-23932 / Pf-5).